A 163-amino-acid polypeptide reads, in one-letter code: Nucleotide-binding protein YajQ (163 aa).

The protein belongs to the YajQ family.

In terms of biological role, nucleotide-binding protein. The chain is Nucleotide-binding protein YajQ from Escherichia coli (strain K12 / DH10B).